The sequence spans 139 residues: ATP synthase epsilon chain (139 aa).

It belongs to the ATPase epsilon chain family. F-type ATPases have 2 components, CF(1) - the catalytic core - and CF(0) - the membrane proton channel. CF(1) has five subunits: alpha(3), beta(3), gamma(1), delta(1), epsilon(1). CF(0) has three main subunits: a, b and c.

The protein resides in the cell inner membrane. In terms of biological role, produces ATP from ADP in the presence of a proton gradient across the membrane. This Acinetobacter baumannii (strain SDF) protein is ATP synthase epsilon chain.